The sequence spans 161 residues: uncharacterized protein (161 aa).

This is an uncharacterized protein from Mycobacterium bovis (strain ATCC BAA-935 / AF2122/97).